The sequence spans 217 residues: C-type lectin domain family 2 member I (217 aa).

The Cytoplasmic segment spans residues 1-53; the sequence is MPDCLETGEKLFVHNMNAQCVQKPEEGNGPLGTGGKIVQGKCFRIISTVSPVK. The chain crosses the membrane as a helical; Signal-anchor for type II membrane protein span at residues 54-74; it reads LYCCYGVIMVLTVAVIALSVA. Residues 75–217 lie on the Extracellular side of the membrane; sequence LSTKKTEQII…YNLHCQTPPV (143 aa). Cysteine 92 and cysteine 103 are oxidised to a cystine. The 105-residue stretch at 99–203 folds into the C-type lectin domain; it reads VGNKCFYFSG…SYINRMWICS (105 aa). N-linked (GlcNAc...) asparagine glycosylation is present at asparagine 112. Cysteines 120 and 202 form a disulfide.

Detected in osteoblasts, growth plate chondrocytes and skeletal muscle overlying the bone (at protein level). Detected in spleen, B-cells, dendritic cells, thymus, and in IL2-activated natural killer cells.

It localises to the cell membrane. Functionally, inhibits osteoclast formation. Receptor for KLRB1F. Enhances T-cell activation. Plays a role in splenocyte activation, T-cell responses and IL-2 production. The sequence is that of C-type lectin domain family 2 member I (Clec2i) from Mus musculus (Mouse).